The chain runs to 267 residues: Indole-3-glycerol phosphate synthase (267 aa).

It belongs to the TrpC family.

The catalysed reaction is 1-(2-carboxyphenylamino)-1-deoxy-D-ribulose 5-phosphate + H(+) = (1S,2R)-1-C-(indol-3-yl)glycerol 3-phosphate + CO2 + H2O. It functions in the pathway amino-acid biosynthesis; L-tryptophan biosynthesis; L-tryptophan from chorismate: step 4/5. This chain is Indole-3-glycerol phosphate synthase, found in Polynucleobacter necessarius subsp. necessarius (strain STIR1).